Reading from the N-terminus, the 423-residue chain is AP-1 complex subunit mu-1 (423 aa).

Residue Ser-2 is modified to N-acetylserine. 3 positions are modified to phosphothreonine: Thr-152, Thr-154, and Thr-223. The region spanning 168–421 (KNEVFLDVIE…ITQNGDYQLR (254 aa)) is the MHD domain.

The protein belongs to the adaptor complexes medium subunit family. As to quaternary structure, adaptor protein complex 1 (AP-1) is a heterotetramer composed of two large adaptins (gamma-type subunit AP1G1 and beta-type subunit AP1B1), a medium adaptin (mu-type subunit AP1M1 or AP1M2) and a small adaptin (sigma-type subunit AP1S1 or AP1S2 or AP1S3). Interacts with MARCHF11. Post-translationally, phosphorylation of membrane-bound AP1M1/AP1M2 increases its affinity for sorting signals.

Its subcellular location is the cytoplasmic vesicle. The protein localises to the clathrin-coated vesicle membrane. It is found in the golgi apparatus. Its function is as follows. Subunit of clathrin-associated adaptor protein complex 1 that plays a role in protein sorting in the trans-Golgi network (TGN) and endosomes. The AP complexes mediate the recruitment of clathrin to membranes and the recognition of sorting signals within the cytosolic tails of transmembrane cargo molecules. This is AP-1 complex subunit mu-1 from Rattus norvegicus (Rat).